Reading from the N-terminus, the 576-residue chain is Potassium-transporting ATPase potassium-binding subunit (576 aa).

12 helical membrane-spanning segments follow: residues 3 to 23 (IFLD…ISPI), 68 to 88 (LYAL…TLLF), 137 to 157 (GLAL…LVLI), 179 to 199 (ILYV…SQGV), 267 to 287 (FEAF…GYMI), 294 to 314 (WFLY…QYYF), 339 to 359 (FGIG…CGAV), 369 to 389 (LGGL…GGVG), 391 to 411 (GLYG…LMIG), 430 to 450 (VVIT…ALYT), 495 to 515 (ITTG…VFYM), and 537 to 557 (LVFG…TFLP).

Belongs to the KdpA family. As to quaternary structure, the system is composed of three essential subunits: KdpA, KdpB and KdpC.

Its subcellular location is the cell inner membrane. Part of the high-affinity ATP-driven potassium transport (or Kdp) system, which catalyzes the hydrolysis of ATP coupled with the electrogenic transport of potassium into the cytoplasm. This subunit binds the periplasmic potassium ions and delivers the ions to the membrane domain of KdpB through an intramembrane tunnel. The chain is Potassium-transporting ATPase potassium-binding subunit from Hydrogenobaculum sp. (strain Y04AAS1).